We begin with the raw amino-acid sequence, 213 residues long: Cytidylate kinase (213 aa).

9–17 (GPAASGKGT) is a binding site for ATP.

Belongs to the cytidylate kinase family. Type 1 subfamily.

It is found in the cytoplasm. The catalysed reaction is CMP + ATP = CDP + ADP. The enzyme catalyses dCMP + ATP = dCDP + ADP. The protein is Cytidylate kinase of Caulobacter vibrioides (strain ATCC 19089 / CIP 103742 / CB 15) (Caulobacter crescentus).